We begin with the raw amino-acid sequence, 272 residues long: Glycerol-3-phosphate acyltransferase (272 aa).

The next 6 membrane-spanning stretches (helical) occupy residues 9–29, 60–80, 99–119, 149–169, 173–193, and 226–246; these read IIILFLFIGYFIGNILFGILI, AIVMVLDFFKSWFSTFVCLLI, VIIYLGGFAAIIGHCFPCFYF, ASISPWMFFICFVLFWSICLI, VSLASIVTVFLLPIWSLIPHL, and LNWWYILVTFLLELLTAVLVI.

Belongs to the PlsY family. In terms of assembly, probably interacts with PlsX.

Its subcellular location is the cell membrane. It catalyses the reaction an acyl phosphate + sn-glycerol 3-phosphate = a 1-acyl-sn-glycero-3-phosphate + phosphate. It participates in lipid metabolism; phospholipid metabolism. In terms of biological role, catalyzes the transfer of an acyl group from acyl-phosphate (acyl-PO(4)) to glycerol-3-phosphate (G3P) to form lysophosphatidic acid (LPA). This enzyme utilizes acyl-phosphate as fatty acyl donor, but not acyl-CoA or acyl-ACP. This chain is Glycerol-3-phosphate acyltransferase, found in Malacoplasma penetrans (strain HF-2) (Mycoplasma penetrans).